A 158-amino-acid chain; its full sequence is MSEEAPVHERTFVMVKPDGVQRGLIGEIISRFEDRGLTLVGGKFTRLDTEVARDHYGEHKDKPFFDDLVSFITAGPVFAMVWEGADATRQVRSMVGETDPAESAPGTIRGDYGLDLGRNVIHASDHEDEGANEREIQLFFDESELYTYERIDDPWLYE.

ATP contacts are provided by Lys16, Phe64, Arg92, Thr98, Arg109, and Asn119. His122 (pros-phosphohistidine intermediate) is an active-site residue.

The protein belongs to the NDK family. Mg(2+) is required as a cofactor.

It is found in the cytoplasm. The catalysed reaction is a 2'-deoxyribonucleoside 5'-diphosphate + ATP = a 2'-deoxyribonucleoside 5'-triphosphate + ADP. It carries out the reaction a ribonucleoside 5'-diphosphate + ATP = a ribonucleoside 5'-triphosphate + ADP. In terms of biological role, major role in the synthesis of nucleoside triphosphates other than ATP. The ATP gamma phosphate is transferred to the NDP beta phosphate via a ping-pong mechanism, using a phosphorylated active-site intermediate. The protein is Nucleoside diphosphate kinase of Haloquadratum walsbyi (strain DSM 16790 / HBSQ001).